Here is a 259-residue protein sequence, read N- to C-terminus: Hydroxyethylthiazole kinase (259 aa).

M50 contacts substrate. R122 and T168 together coordinate ATP. G195 serves as a coordination point for substrate.

The protein belongs to the Thz kinase family. Mg(2+) is required as a cofactor.

The catalysed reaction is 5-(2-hydroxyethyl)-4-methylthiazole + ATP = 4-methyl-5-(2-phosphooxyethyl)-thiazole + ADP + H(+). The protein operates within cofactor biosynthesis; thiamine diphosphate biosynthesis; 4-methyl-5-(2-phosphoethyl)-thiazole from 5-(2-hydroxyethyl)-4-methylthiazole: step 1/1. Its function is as follows. Catalyzes the phosphorylation of the hydroxyl group of 4-methyl-5-beta-hydroxyethylthiazole (THZ). This is Hydroxyethylthiazole kinase from Escherichia coli O127:H6 (strain E2348/69 / EPEC).